Here is a 728-residue protein sequence, read N- to C-terminus: MEYKYSTIVDKSKWDPEGLTEGIPLRRHEAGDLEEVGSFRVQEDWRRLVGPLENPYRGSLGPEISFITYTVPECLPERLEAISYSLDYGFMHDDEIDLNIASAELSDVGGALKQGGATGKIDEGKSSSGKRKMAAQLLREMMALDPERAMALAKSWAQGVQHSARRVEEKDWKSLDEYIPFRCMDLGYMHWHGLVTFGCAITVPEEEEEERRRLLEPAVIACMMTNDLFSYEKEKNDNNPQNAVTVIMKINKCGEEEAKEVCKKRIRVECAKYAQIVKETLARTDISLDLKKYIEIMQYTVSGNWAWSTQCPRYHFPGRWNELQKLRAEHGIAKYPARYSLKERTNGVNGVNGVNGINGTNGINGTNGVNGKRNRDEDGDENDARINGNGFKKPALTSQGKDSFVLDDVVALSLNLHLPDLGDGVVLQPYRYLTSLPSKGFRDMAIDALNTWLRVPSTSTSTIKDLIKKLHSASLMLDDIEDNSPLRRAKPSTHIIYGNAQTINSATYQYTEATSLAANLSNPLSLRIFLDEIQQLYIGQSYDLYWTHNALCPSITEYLRMVDQKTGGLFRMLTRLMVAESPGSNKILDRALFPLSHLIGRFFQIRDDYQNLSSAEYSRQKGFVEDLDEGKYSFTLIHCIQTVEANEALASEMMALRAFLIKRRVDGGLSNEAKMEVLGIMKKTKSLEYTLGVLRALQEELEREVGRLEGKFGEENLPLRLMVDMLKV.

The tract at residues 1 to 322 (MEYKYSTIVD…RYHFPGRWNE (322 aa)) is (7Z)-ophiobola-7,19-dien-3-ol synthase. 2 residues coordinate Mg(2+): Asp-93 and Asp-97. Residue Asp-93 coordinates substrate. Positions 93 to 97 (DDEID) match the DDXXD 1 motif. Residues 182–185 (RCMD), Asn-226, 230–234 (SYEKE), and 313–314 (RY) each bind substrate. Residues 226-234 (NDLFSYEKE) carry the NSE/DTE motif. Residues 323-728 (LQKLRAEHGI…LRLMVDMLKV (406 aa)) form a geranylfarnesyl diphosphate synthase region. Positions 362–371 (GINGTNGVNG) are enriched in low complexity. Positions 362–394 (GINGTNGVNGKRNRDEDGDENDARINGNGFKKP) are disordered. Positions 439, 442, and 471 each coordinate isopentenyl diphosphate. Residues Asp-478 and Asp-482 each contribute to the Mg(2+) site. The DDXXD 2 signature appears at 478–482 (DDIED). Arg-487 provides a ligand contact to dimethylallyl diphosphate. Residue Arg-488 coordinates isopentenyl diphosphate. Dimethylallyl diphosphate contacts are provided by Lys-565, Thr-566, Gln-604, Asn-611, Lys-621, and Lys-631.

In the N-terminal section; belongs to the terpene synthase family. It in the C-terminal section; belongs to the FPP/GGPP synthase family. Requires Mg(2+) as cofactor.

It catalyses the reaction isopentenyl diphosphate + (2E,6E)-farnesyl diphosphate = (2E,6E,10E)-geranylgeranyl diphosphate + diphosphate. The enzyme catalyses isopentenyl diphosphate + (2E,6E,10E)-geranylgeranyl diphosphate = (2E,6E,10E,14E)-geranylfarnesyl diphosphate + diphosphate. The catalysed reaction is (2E,6E,10E,14E)-geranylfarnesyl diphosphate + H2O = ophiobolin F + diphosphate. The protein operates within secondary metabolite biosynthesis; terpenoid biosynthesis. Its function is as follows. Bifunctional sesterterpene synthase; part of the gene cluster that mediates the biosynthesis of the sesterterpenes ophiobolins, fungal phytotoxins with potential anti-cancer activities. The first step of the pathway is performed by the sesterterpene synthase oblA that possesses both prenyl transferase and terpene cyclase activity, converting isopentenyl diphosphate and dimethylallyl diphosphate into geranylfarnesyl diphosphate (GFPP) and further converting GFPP into ophiobolin F, respectively. Other sesterterpenoids (C(25) terpenoids) are found as minor products of oblA. The cytochrome P450 monooxygenase oblB then catalyzes a four-step oxidative transformation of ophiobolin F to yield ophiobolin C. The function of the cytochrome P450 monooxygenase oblE has still to be determined. The polypeptide is Ophiobolin F synthase oblA (Emericella variicolor (Aspergillus stellatus)).